The sequence spans 399 residues: Nicotinate phosphoribosyltransferase 1 (399 aa).

At His224 the chain carries Phosphohistidine; by autocatalysis.

It belongs to the NAPRTase family. Post-translationally, transiently phosphorylated on a His residue during the reaction cycle. Phosphorylation strongly increases the affinity for substrates and increases the rate of nicotinate D-ribonucleotide production. Dephosphorylation regenerates the low-affinity form of the enzyme, leading to product release.

It carries out the reaction nicotinate + 5-phospho-alpha-D-ribose 1-diphosphate + ATP + H2O = nicotinate beta-D-ribonucleotide + ADP + phosphate + diphosphate. The protein operates within cofactor biosynthesis; NAD(+) biosynthesis; nicotinate D-ribonucleotide from nicotinate: step 1/1. Functionally, catalyzes the synthesis of beta-nicotinate D-ribonucleotide from nicotinate and 5-phospho-D-ribose 1-phosphate at the expense of ATP. This chain is Nicotinate phosphoribosyltransferase 1, found in Pseudomonas aeruginosa (strain ATCC 15692 / DSM 22644 / CIP 104116 / JCM 14847 / LMG 12228 / 1C / PRS 101 / PAO1).